Consider the following 284-residue polypeptide: Bifunctional protein FolD (284 aa).

Residues 165–167 (GRS) and S190 contribute to the NADP(+) site.

This sequence belongs to the tetrahydrofolate dehydrogenase/cyclohydrolase family. As to quaternary structure, homodimer.

The enzyme catalyses (6R)-5,10-methylene-5,6,7,8-tetrahydrofolate + NADP(+) = (6R)-5,10-methenyltetrahydrofolate + NADPH. The catalysed reaction is (6R)-5,10-methenyltetrahydrofolate + H2O = (6R)-10-formyltetrahydrofolate + H(+). Its pathway is one-carbon metabolism; tetrahydrofolate interconversion. Catalyzes the oxidation of 5,10-methylenetetrahydrofolate to 5,10-methenyltetrahydrofolate and then the hydrolysis of 5,10-methenyltetrahydrofolate to 10-formyltetrahydrofolate. This chain is Bifunctional protein FolD, found in Streptococcus mutans serotype c (strain ATCC 700610 / UA159).